A 325-amino-acid polypeptide reads, in one-letter code: Undecaprenyl-phosphate 4-deoxy-4-formamido-L-arabinose transferase (325 aa).

A run of 2 helical transmembrane segments spans residues 236-256 (LSIF…LLIL) and 270-290 (VFTL…GMGL).

It belongs to the glycosyltransferase 2 family.

Its subcellular location is the cell inner membrane. It carries out the reaction UDP-4-deoxy-4-formamido-beta-L-arabinose + di-trans,octa-cis-undecaprenyl phosphate = 4-deoxy-4-formamido-alpha-L-arabinopyranosyl di-trans,octa-cis-undecaprenyl phosphate + UDP. It participates in glycolipid biosynthesis; 4-amino-4-deoxy-alpha-L-arabinose undecaprenyl phosphate biosynthesis; 4-amino-4-deoxy-alpha-L-arabinose undecaprenyl phosphate from UDP-4-deoxy-4-formamido-beta-L-arabinose and undecaprenyl phosphate: step 1/2. Its pathway is bacterial outer membrane biogenesis; lipopolysaccharide biosynthesis. Functionally, catalyzes the transfer of 4-deoxy-4-formamido-L-arabinose from UDP to undecaprenyl phosphate. The modified arabinose is attached to lipid A and is required for resistance to polymyxin and cationic antimicrobial peptides. The protein is Undecaprenyl-phosphate 4-deoxy-4-formamido-L-arabinose transferase of Edwardsiella ictaluri (strain 93-146).